The primary structure comprises 139 residues: Cuticle protein 76 (139 aa).

6 tandem repeats follow at residues 7–10 (AAPA), 68–71 (AAPA), 75–78 (AAPV), 93–95 (AAP), 105–108 (AAPA), and 121–124 (AAPA).

Component of the cuticle of migratory locust which contains more than 100 different structural proteins. The sequence is that of Cuticle protein 76 from Locusta migratoria (Migratory locust).